Here is a 172-residue protein sequence, read N- to C-terminus: MEIEATTVQKRRSLPTIAMHKQSRTLTKSKPKIRIIHIFAPEIIKTDVANFREIVQNLTGKQDHHHHDLPHQKGLKRNPRSRRSHDHHEVHDMNKSHGFCINSDEEEEGMVSMTWNGNGDESSGGFLNGLGDLDGFIQELGEFPYLPFTIDPAVASSSHLHGNVFAEPHHYA.

The VQ signature appears at 51–60 (FREIVQNLTG). The segment at 60–97 (GKQDHHHHDLPHQKGLKRNPRSRRSHDHHEVHDMNKSH) is disordered. The segment covering 61–71 (KQDHHHHDLPH) has biased composition (basic and acidic residues). Positions 72 to 85 (QKGLKRNPRSRRSH) are enriched in basic residues. A compositionally biased stretch (basic and acidic residues) spans 86 to 95 (DHHEVHDMNK).

The protein resides in the nucleus. In terms of biological role, may function as positive regulator of plant growth. In Arabidopsis thaliana (Mouse-ear cress), this protein is VQ motif-containing protein 17.